A 296-amino-acid chain; its full sequence is uncharacterized protein (296 aa).

An HTH lysR-type domain is found at 1–60 (MDPKISYFQTFIVASKTKSFSKAAKRLGITQGTVSNHISALEKYFDAQLFLRTPEGVDLT). The segment at residues 20–39 (FSKAAKRLGITQGTVSNHIS) is a DNA-binding region (H-T-H motif).

The protein belongs to the LysR transcriptional regulatory family.

This is an uncharacterized protein from Methanocaldococcus jannaschii (strain ATCC 43067 / DSM 2661 / JAL-1 / JCM 10045 / NBRC 100440) (Methanococcus jannaschii).